Here is a 99-residue protein sequence, read N- to C-terminus: Transmembrane protein 14A (99 aa).

The next 3 membrane-spanning stretches (helical) occupy residues 1 to 21, 24 to 44, and 79 to 99; these read MDLI…FGYK, GGVP…YGAY, and PAGL…LLLL.

It belongs to the TMEM14 family. In terms of tissue distribution, expressed at significantly higher levels in ovarian cancer tissues than in normal tissues (at protein level).

The protein resides in the mitochondrion membrane. It localises to the endoplasmic reticulum membrane. Its function is as follows. Inhibits apoptosis via negative regulation of the mitochondrial outer membrane permeabilization involved in apoptotic signaling pathway. The protein is Transmembrane protein 14A (TMEM14A) of Homo sapiens (Human).